We begin with the raw amino-acid sequence, 299 residues long: Myozenin-1 (299 aa).

The segment at 1 to 34 (MPLSGTPAPNKKRKSSKLIMELTGGGQESSGLNL) is disordered. Position 82 is a phosphoserine (S82). The segment at 102-174 (GQGFSYSKSN…TGSGDQAGGE (73 aa)) is disordered. Gly residues-rich tracts occupy residues 112-125 (GRGG…GSAG) and 137-173 (SGSG…QAGG).

Belongs to the myozenin family. In terms of assembly, interacts with ACTN2, ACTN3, FLNA, FLNB, FLNC, LDB3, PPP3CA and TCAP. Interacts via its C-terminal region with MYOT. As to expression, expressed primarily in skeletal muscle. Detected at lower levels in heart, prostate and pancreas.

Its subcellular location is the nucleus. It localises to the cell projection. It is found in the pseudopodium. In terms of biological role, myozenins may serve as intracellular binding proteins involved in linking Z-disk proteins such as alpha-actinin, gamma-filamin, TCAP/telethonin, LDB3/ZASP and localizing calcineurin signaling to the sarcomere. Plays an important role in the modulation of calcineurin signaling. May play a role in myofibrillogenesis. The sequence is that of Myozenin-1 from Homo sapiens (Human).